The primary structure comprises 461 residues: Fumarate hydratase class II (461 aa).

Substrate contacts are provided by residues 99–101 (SGT), Arg-127, 130–133 (HPND), 140–142 (SSN), and Thr-188. The active-site Proton donor/acceptor is the His-189. Ser-319 is an active-site residue. Residues Ser-320 and 325 to 327 (KVN) each bind substrate.

The protein belongs to the class-II fumarase/aspartase family. Fumarase subfamily. Homotetramer.

It is found in the cytoplasm. It carries out the reaction (S)-malate = fumarate + H2O. Its pathway is carbohydrate metabolism; tricarboxylic acid cycle; (S)-malate from fumarate: step 1/1. In terms of biological role, involved in the TCA cycle. Catalyzes the stereospecific interconversion of fumarate to L-malate. The polypeptide is Fumarate hydratase class II (Chromobacterium violaceum (strain ATCC 12472 / DSM 30191 / JCM 1249 / CCUG 213 / NBRC 12614 / NCIMB 9131 / NCTC 9757 / MK)).